Consider the following 444-residue polypeptide: Nuclear envelope integral membrane protein 1 (444 aa).

An N-terminal signal peptide occupies residues 1-43 (MAGGMKVAVSPAVGPGPWGSGVGGGGTVRLLLILSGCLVYGTA). Asn-125 carries N-linked (GlcNAc...) asparagine glycosylation. 5 consecutive transmembrane segments (helical) span residues 161–181 (PKLFLVFLLGLMLFFCGDLLS), 186–206 (FYYSTGMTVGIVASLLIIIFI), 216–236 (PIYVILVGGWSFSLYLIQLVF), 245–265 (CYWQYLLSYVLTVGFMSFAVC), and 289–309 (LCFMYSGIQIPHIALAIIIIA). Residues 186-297 (FYYSTGMTVG…GLCFMYSGIQ (112 aa)) form an a; required for its colocalization with lamins at the nuclear envelope region. Residues 336–405 (PVPPRLLTEE…LTPNEVSVHE (70 aa)) form a b; required for interaction with RAN-GTP region. Residues 336–444 (PVPPRLLTEE…PAITQNNFLT (109 aa)) are required for nuclear localization. Ser-368, Ser-424, and Ser-425 each carry phosphoserine.

This sequence belongs to the NEMP family. As to quaternary structure, homooligomer. Interacts with RAN-GTP. Interacts with EMD. In terms of processing, phosphorylation may regulate its interaction with RAN-GTP.

The protein resides in the nucleus inner membrane. Its subcellular location is the nucleus envelope. Its function is as follows. Together with EMD, contributes to nuclear envelope stiffness in germ cells. Required for female fertility. Essential for normal erythropoiesis. Required for efficient nuclear envelope opening and enucleation during the late stages of erythroblast maturation. This is Nuclear envelope integral membrane protein 1 (NEMP1) from Homo sapiens (Human).